A 271-amino-acid chain; its full sequence is Sulfur carrier protein FdhD (271 aa).

The active-site Cysteine persulfide intermediate is Cys114.

Belongs to the FdhD family.

It is found in the cytoplasm. In terms of biological role, required for formate dehydrogenase (FDH) activity. Acts as a sulfur carrier protein that transfers sulfur from IscS to the molybdenum cofactor prior to its insertion into FDH. The polypeptide is Sulfur carrier protein FdhD (Agrobacterium fabrum (strain C58 / ATCC 33970) (Agrobacterium tumefaciens (strain C58))).